Consider the following 236-residue polypeptide: tRNA (guanine-N(1)-)-methyltransferase (236 aa).

S-adenosyl-L-methionine contacts are provided by residues Gly110 and 129-134 (LGDFVL).

It belongs to the RNA methyltransferase TrmD family. Homodimer.

Its subcellular location is the cytoplasm. The enzyme catalyses guanosine(37) in tRNA + S-adenosyl-L-methionine = N(1)-methylguanosine(37) in tRNA + S-adenosyl-L-homocysteine + H(+). Functionally, specifically methylates guanosine-37 in various tRNAs. The polypeptide is tRNA (guanine-N(1)-)-methyltransferase (Clostridium perfringens (strain SM101 / Type A)).